A 67-amino-acid polypeptide reads, in one-letter code: Small ribosomal subunit protein eS27 (67 aa).

4 residues coordinate Zn(2+): C22, C25, C41, and C44. The segment at 22-44 adopts a C4-type zinc-finger fold; that stretch reads CPDCGNEQVTFSHAAMVVRCLVC.

This sequence belongs to the eukaryotic ribosomal protein eS27 family. Part of the 30S ribosomal subunit. The cofactor is Zn(2+).

This chain is Small ribosomal subunit protein eS27, found in Pyrobaculum neutrophilum (strain DSM 2338 / JCM 9278 / NBRC 100436 / V24Sta) (Thermoproteus neutrophilus).